Here is a 215-residue protein sequence, read N- to C-terminus: Probable phosphoglycerate mutase GpmB (215 aa).

Substrate-binding positions include 8–15 (RHGETQWN), 21–22 (QG), R58, R60, 82–85 (ELNM), 104–105 (RR), and 151–152 (GI). H9 (tele-phosphohistidine intermediate) is an active-site residue. The active-site Proton donor/acceptor is the E82.

Belongs to the phosphoglycerate mutase family. GpmB subfamily.

The enzyme catalyses (2R)-2-phosphoglycerate = (2R)-3-phosphoglycerate. It participates in carbohydrate degradation; glycolysis; pyruvate from D-glyceraldehyde 3-phosphate: step 3/5. The polypeptide is Probable phosphoglycerate mutase GpmB (Shigella boydii serotype 18 (strain CDC 3083-94 / BS512)).